A 217-amino-acid chain; its full sequence is Peptide methionine sulfoxide reductase MsrA (217 aa).

The active site involves Cys-56.

The protein belongs to the MsrA Met sulfoxide reductase family.

It catalyses the reaction L-methionyl-[protein] + [thioredoxin]-disulfide + H2O = L-methionyl-(S)-S-oxide-[protein] + [thioredoxin]-dithiol. It carries out the reaction [thioredoxin]-disulfide + L-methionine + H2O = L-methionine (S)-S-oxide + [thioredoxin]-dithiol. In terms of biological role, has an important function as a repair enzyme for proteins that have been inactivated by oxidation. Catalyzes the reversible oxidation-reduction of methionine sulfoxide in proteins to methionine. The polypeptide is Peptide methionine sulfoxide reductase MsrA (Corynebacterium glutamicum (strain ATCC 13032 / DSM 20300 / JCM 1318 / BCRC 11384 / CCUG 27702 / LMG 3730 / NBRC 12168 / NCIMB 10025 / NRRL B-2784 / 534)).